Reading from the N-terminus, the 240-residue chain is EF-hand domain-containing protein D1 (240 aa).

Residues glutamate 17 to serine 54 are disordered. EF-hand domains lie at arginine 91–proline 126 and glutamine 127–glycine 162. Ca(2+)-binding residues include aspartate 104, aspartate 108, glutamate 115, aspartate 140, aspartate 142, aspartate 144, lysine 146, and glutamate 151.

In terms of tissue distribution, widely expressed. Highest expression in testis, followed by ovary, kidney, cerebrum, cerebellum, heart, liver, and spleen. In the cerebrum and cerebellum, undetectable at embryonic stages, expression increases after birth up to adult stage. In adult CNS, detected in neurons of the cerebellum, cerebrum and hippocampus formation, including dentate gyrus and Cornu Ammonis, but not in the white matter. In the testis, expressed in spermatocytes, but not in spermatogonia nor in interstitial cells. In ovary, found predominantly in mural granulosa cells and those of the cumulus oophorus. In kidney, expressed in collecting ducts, but not in glomeruli. Not detected in skeletal muscle.

Its subcellular location is the mitochondrion inner membrane. Acts as a calcium sensor for mitochondrial flash (mitoflash) activation, an event characterized by stochastic bursts of superoxide production. May play a role in neuronal differentiation. The protein is EF-hand domain-containing protein D1 (Efhd1) of Mus musculus (Mouse).